A 401-amino-acid chain; its full sequence is Probable plasmid-partitioning protein ParB (401 aa).

The interval 232-272 (KTRGKENARDKAAAVKEEVKPSKKPKADNGEKTPKGRSHEE) is disordered.

Belongs to the ParB family.

The protein is Probable plasmid-partitioning protein ParB of Xylella fastidiosa (strain 9a5c).